Consider the following 250-residue polypeptide: Protein BTG4 (250 aa).

The protein belongs to the BTG family. As to quaternary structure, interacts with CNOT7 and EIF4E. Interacts with CNOT8. As to expression, expressed in oocytes. Expressed in testis and in olfactory epithelium.

Its function is as follows. Adapter protein that bridges CNOT7, a catalytic subunit of the CCR4-NOT complex, to EIF4E, and facilitates maternal mRNAs decay during the maturation of oocytes and in the fertilized egg. It is therefore required for the maternal-zygotic transition (MZT), zygotic cleavage and initiation of embryonic development. The chain is Protein BTG4 (Btg4) from Mus musculus (Mouse).